Reading from the N-terminus, the 280-residue chain is 3-methyl-2-oxobutanoate hydroxymethyltransferase (280 aa).

D49 and D88 together coordinate Mg(2+). Residues 49–50, D88, and K118 each bind 3-methyl-2-oxobutanoate; that span reads DS. E120 is a Mg(2+) binding site. The active-site Proton acceptor is the E187.

This sequence belongs to the PanB family. Homodecamer; pentamer of dimers. It depends on Mg(2+) as a cofactor.

The protein localises to the cytoplasm. The enzyme catalyses 3-methyl-2-oxobutanoate + (6R)-5,10-methylene-5,6,7,8-tetrahydrofolate + H2O = 2-dehydropantoate + (6S)-5,6,7,8-tetrahydrofolate. Its pathway is cofactor biosynthesis; (R)-pantothenate biosynthesis; (R)-pantoate from 3-methyl-2-oxobutanoate: step 1/2. Functionally, catalyzes the reversible reaction in which hydroxymethyl group from 5,10-methylenetetrahydrofolate is transferred onto alpha-ketoisovalerate to form ketopantoate. The chain is 3-methyl-2-oxobutanoate hydroxymethyltransferase from Xanthobacter autotrophicus (strain ATCC BAA-1158 / Py2).